The following is a 290-amino-acid chain: Fructose-1,6-bisphosphatase class 1 (290 aa).

Residues E78, D96, L98, and D99 each contribute to the Mg(2+) site. Residues 99–102 (DGSS), Y201, and K226 contribute to the substrate site. E232 contributes to the Mg(2+) binding site.

The protein belongs to the FBPase class 1 family. In terms of assembly, homotetramer. Mg(2+) is required as a cofactor.

It localises to the cytoplasm. The catalysed reaction is beta-D-fructose 1,6-bisphosphate + H2O = beta-D-fructose 6-phosphate + phosphate. It functions in the pathway carbohydrate biosynthesis; gluconeogenesis. This Helicobacter pylori (strain Shi470) protein is Fructose-1,6-bisphosphatase class 1.